We begin with the raw amino-acid sequence, 777 residues long: Aminopeptidase P (777 aa).

A signal peptide spans 1–17 (MQLNFLLFVFIFLMVFH). A substrate-binding site is contributed by His551. Residues Asp570 and Asp581 each coordinate Mn(2+). A substrate-binding site is contributed by His640. His644 lines the Mn(2+) pocket. Residue His653 coordinates substrate. Residues Glu676 and Glu690 each coordinate Mn(2+).

Belongs to the peptidase M24B family. As to quaternary structure, homodimer. Mn(2+) is required as a cofactor. Post-translationally, the N-terminus may be proteolytically cleaved to generate a 73-kDa mature form.

The protein resides in the vacuole lumen. It is found in the cytoplasm. The catalysed reaction is Release of any N-terminal amino acid, including proline, that is linked to proline, even from a dipeptide or tripeptide.. Its activity is regulated as follows. Partially activated by Co(2+) and Mg(2+) has no effect. Inhibited by 1 mM Zn(2+), Ni(2+), or Cu(2+). Inhibited by apstatin, a non-hydrolysable peptide analog. Functionally, catalyzes the removal of a penultimate prolyl residue from the N-termini of peptides. In the food vacuole, involved in the final step of host hemoglobin catabolism, by cleaving hemoglobin-derived oligopeptides. In the cytoplasm, may be involved in the last steps of the turnover of ubiquitinated proteins. This is Aminopeptidase P from Plasmodium falciparum (isolate 3D7).